The following is a 428-amino-acid chain: Phosphoribosylamine--glycine ligase (428 aa).

An ATP-grasp domain is found at 109-316 (KDFLARHNIP…LVELCLAGTQ (208 aa)). 135–196 (VRQKGAPIVI…EEFLDGEEAS (62 aa)) contributes to the ATP binding site. Mg(2+)-binding residues include Glu-286 and Asn-288.

It belongs to the GARS family. Mg(2+) serves as cofactor. Requires Mn(2+) as cofactor.

The enzyme catalyses 5-phospho-beta-D-ribosylamine + glycine + ATP = N(1)-(5-phospho-beta-D-ribosyl)glycinamide + ADP + phosphate + H(+). It functions in the pathway purine metabolism; IMP biosynthesis via de novo pathway; N(1)-(5-phospho-D-ribosyl)glycinamide from 5-phospho-alpha-D-ribose 1-diphosphate: step 2/2. This chain is Phosphoribosylamine--glycine ligase, found in Yersinia pestis.